Consider the following 1294-residue polypeptide: Ethylene-insensitive protein 2 (1294 aa).

The Cytoplasmic segment spans residues 1–12; it reads MEAEIVNVRPQL. A helical transmembrane segment spans residues 13–33; that stretch reads GFIQRMVPALLPVLLVSVGYI. Topologically, residues 34-50 are extracellular; sequence DPGKWVANIEGGARFGY. The helical transmembrane segment at 51 to 71 threads the bilayer; the sequence is DLVAITLLFNFAAILCQYVAA. Residues 72 to 105 lie on the Cytoplasmic side of the membrane; that stretch reads RISVVTGKHLAQICNEEYDKWTCMFLGIQAEFSA. Residues 106–126 traverse the membrane as a helical segment; sequence ILLDLTMVVGVAHALNLLFGV. Position 127 (Glu127) is a topological domain, extracellular. The helical transmembrane segment at 128-148 threads the bilayer; the sequence is LSTGVFLAAMDAFLFPVFASF. The Cytoplasmic portion of the chain corresponds to 149–155; it reads LENGMAN. A helical membrane pass occupies residues 156–176; the sequence is TVSIYSAGLVLLLYVSGVLLS. At 177 to 194 the chain is on the extracellular side; that stretch reads QSEIPLSMNGVLTRLNGE. Residues 195 to 215 form a helical membrane-spanning segment; the sequence is SAFALMGLLGASIVPHNFYIH. Residues 216–237 are Cytoplasmic-facing; that stretch reads SYFAGESTSSSDVDKSSLCQDH. The helical transmembrane segment at 238 to 258 threads the bilayer; that stretch reads LFAIFGVFSGLSLVNYVLMNA. The Extracellular portion of the chain corresponds to 259-287; that stretch reads AANVFHSTGLVVLTFHDALSLMEQVFMSP. A helical membrane pass occupies residues 288 to 308; the sequence is LIPVVFLMLLFFSSQITALAW. The Cytoplasmic segment spans residues 309-334; the sequence is AFGGEVVLHDFLKIEIPAWLHRATIR. 2 consecutive transmembrane segments (helical) span residues 335 to 355 and 356 to 376; these read ILAV…GIYQ and LLIF…IPLF. The Cytoplasmic portion of the chain corresponds to 377–397; the sequence is RIASSRQIMGVHKIPQVGEFL. A helical transmembrane segment spans residues 398-418; sequence ALTTFLGFLGLNVVFVVEMVF. Topologically, residues 419 to 440 are extracellular; sequence GSSDWAGGLRWNTVMGTSIQYT. Residues 441–461 form a helical membrane-spanning segment; the sequence is TLLVSSCASLCLILWLAATPL. Residues 462–1294 lie on the Cytoplasmic side of the membrane; sequence KSASNRAEAQ…KNVTAYGSLG (833 aa). 2 disordered regions span residues 534–561 and 623–662; these read TDQE…SSLK and ETEE…SLSR. A compositionally biased stretch (basic and acidic residues) spans 536-550; that stretch reads QEIRSSPPEERELDV. Ser645, Ser659, and Ser757 each carry phosphoserine. Thr819 is subject to Phosphothreonine. Phosphoserine is present on Ser924. The Nuclear localization signal motif lies at 1262 to 1269; that stretch reads LKRYKRRL. The tract at residues 1269-1294 is disordered; the sequence is LSNKPVGMNQDGPGSRKNVTAYGSLG. A Phosphoserine modification is found at Ser1283.

Belongs to the NRAMP (TC 2.A.55) family. Interacts (via NLS) with ETR1. Interacts (via C-terminus) with EER5 and the COP9 signalosome subunits CSN3, CSN6A and CSN6B. Interacts with ETP1 and ETP2. Interacts with CTR1. Interacts with all members of the ethylene receptor family, including ETR1, ETR2, ERS1, ERS2 and EIN4. Binds to MRF3/ECIP1. In terms of assembly, interacts with several P-body components, such as XRN4/EIN5, PAB2, PAB4 and PAB8. Binds to ENAP1 in the presence of ethylene; this reaction facilitates its association with histone. Post-translationally, phosphorylated by CTR1 on at least 4 sites. Phosphorylation of Ser-645 and Ser-924 is involved in repressing EIN2 signaling. Loss of phosphorylation results in nuclear localization of the C-terminus of EIN2. In terms of tissue distribution, localized to the guard cells after methyl jasmonate treatment.

The protein localises to the endoplasmic reticulum membrane. It localises to the nucleus. Its subcellular location is the cytoplasm. Functionally, central factor in signaling pathways regulated by ethylene (ET) and involved in various processes including development, plant defense, senescence, nucleotide sugar flux, and tropisms. Necessary for ethylene-mediated gene regulation, and for the induction of some genes by ozone. Acts downstream of ET receptors, and upstream of ethylene regulated transcription factors. Required for cytokinin-mediated processes. Seems to be implicated in cross-talk between ET, jasmonate and other pathways. Probably not involved in iron uptake. Has a short half-life and undergoes rapid proteasome-mediated turnover in the absence of ethylene. Required for ethylene-induced EIN3 stabilization via proteasomal degradation of EBF1/EBF2 proteins. Regulates the leaf senescence induced by methyl jasmonate, ethylene and abscisic acid. Required during salt stress to confer resistance. Trafficking signal inducing ethylene response. The nuclear localization is both necessary and sufficient to activate EIN3-mediated transcription and ethylene responses. Involved in ethylene (ET)-mediated signaling pathways by triggering histone acetylation of H3K14 and H3K23 in an ENAP1-dependent manner, thus influencing the expression of ethylene-responsive genes. Necessary and sufficient for 3'-UTR-mediated translational repression of EBF1 and EBF2 mRNAs. Ethylene induces EIN2-CEND to associate with 3' UTRs in cytoplasmic foci and target EBF1/2 mRNAs to cytoplasmic processing-body (P-body). MPK6 regulates the cleavage and nuclear translocation of EIN2-CEND under methyl jasmonate treatment. Required for EIN3 accumulation. This chain is Ethylene-insensitive protein 2, found in Arabidopsis thaliana (Mouse-ear cress).